The chain runs to 308 residues: 4-hydroxy-3-methylbut-2-enyl diphosphate reductase (308 aa).

Cys-12 serves as a coordination point for [4Fe-4S] cluster. Residues His-41 and His-74 each coordinate (2E)-4-hydroxy-3-methylbut-2-enyl diphosphate. 2 residues coordinate dimethylallyl diphosphate: His-41 and His-74. Positions 41 and 74 each coordinate isopentenyl diphosphate. Cys-96 provides a ligand contact to [4Fe-4S] cluster. His-124 is a binding site for (2E)-4-hydroxy-3-methylbut-2-enyl diphosphate. His-124 lines the dimethylallyl diphosphate pocket. His-124 contributes to the isopentenyl diphosphate binding site. Catalysis depends on Glu-126, which acts as the Proton donor. Thr-166 is a binding site for (2E)-4-hydroxy-3-methylbut-2-enyl diphosphate. [4Fe-4S] cluster is bound at residue Cys-196. Residues Ser-224, Ser-225, Asn-226, and Ser-268 each coordinate (2E)-4-hydroxy-3-methylbut-2-enyl diphosphate. Dimethylallyl diphosphate is bound by residues Ser-224, Ser-225, Asn-226, and Ser-268. Isopentenyl diphosphate contacts are provided by Ser-224, Ser-225, Asn-226, and Ser-268.

Belongs to the IspH family. [4Fe-4S] cluster serves as cofactor.

The catalysed reaction is isopentenyl diphosphate + 2 oxidized [2Fe-2S]-[ferredoxin] + H2O = (2E)-4-hydroxy-3-methylbut-2-enyl diphosphate + 2 reduced [2Fe-2S]-[ferredoxin] + 2 H(+). It catalyses the reaction dimethylallyl diphosphate + 2 oxidized [2Fe-2S]-[ferredoxin] + H2O = (2E)-4-hydroxy-3-methylbut-2-enyl diphosphate + 2 reduced [2Fe-2S]-[ferredoxin] + 2 H(+). Its pathway is isoprenoid biosynthesis; dimethylallyl diphosphate biosynthesis; dimethylallyl diphosphate from (2E)-4-hydroxy-3-methylbutenyl diphosphate: step 1/1. It functions in the pathway isoprenoid biosynthesis; isopentenyl diphosphate biosynthesis via DXP pathway; isopentenyl diphosphate from 1-deoxy-D-xylulose 5-phosphate: step 6/6. Catalyzes the conversion of 1-hydroxy-2-methyl-2-(E)-butenyl 4-diphosphate (HMBPP) into a mixture of isopentenyl diphosphate (IPP) and dimethylallyl diphosphate (DMAPP). Acts in the terminal step of the DOXP/MEP pathway for isoprenoid precursor biosynthesis. The protein is 4-hydroxy-3-methylbut-2-enyl diphosphate reductase of Vesicomyosocius okutanii subsp. Calyptogena okutanii (strain HA).